A 149-amino-acid polypeptide reads, in one-letter code: Transcriptional repressor NrdR (149 aa).

Residues 3 to 34 (CPFCSENDTKVIDSRLVADGHQVRRRRQCLAC) fold into a zinc finger. One can recognise an ATP-cone domain in the interval 49–139 (PKVIKSNGNR…VYRSFEDIRE (91 aa)).

This sequence belongs to the NrdR family. Requires Zn(2+) as cofactor.

Negatively regulates transcription of bacterial ribonucleotide reductase nrd genes and operons by binding to NrdR-boxes. The chain is Transcriptional repressor NrdR from Vibrio parahaemolyticus serotype O3:K6 (strain RIMD 2210633).